Reading from the N-terminus, the 192-residue chain is Probable metallophosphoesterase MJ0623 (192 aa).

A divalent metal cation-binding residues include Asp-41, His-43, Asp-70, Asn-92, His-115, His-144, and His-146.

This sequence belongs to the metallophosphoesterase superfamily. YfcE family. A divalent metal cation serves as cofactor.

The chain is Probable metallophosphoesterase MJ0623 from Methanocaldococcus jannaschii (strain ATCC 43067 / DSM 2661 / JAL-1 / JCM 10045 / NBRC 100440) (Methanococcus jannaschii).